The sequence spans 66 residues: Large ribosomal subunit protein bL31 (66 aa).

Residues C16, C18, C36, and C39 each contribute to the Zn(2+) site.

The protein belongs to the bacterial ribosomal protein bL31 family. Type A subfamily. Part of the 50S ribosomal subunit. It depends on Zn(2+) as a cofactor.

Functionally, binds the 23S rRNA. The chain is Large ribosomal subunit protein bL31 from Campylobacter hominis (strain ATCC BAA-381 / DSM 21671 / CCUG 45161 / LMG 19568 / NCTC 13146 / CH001A).